Reading from the N-terminus, the 297-residue chain is Beta-1,3-galactosyltransferase 5 (297 aa).

The Cytoplasmic segment spans residues 1–7; that stretch reads MAFPKMR. A helical; Signal-anchor for type II membrane protein membrane pass occupies residues 8-28; it reads LMYVCLLVLGALCVYFSMYSL. Residues 29 to 297 are Lumenal-facing; the sequence is NLFKEQSFVY…KPRTLLDYWQ (269 aa). N-linked (GlcNAc...) asparagine glycosylation is found at asparagine 130, asparagine 174, and asparagine 231.

The protein belongs to the glycosyltransferase 31 family.

Its subcellular location is the golgi apparatus membrane. It catalyses the reaction a globoside Gb4Cer (d18:1(4E)) + UDP-alpha-D-galactose = a globoside GalGb4Cer (d18:1(4E)) + UDP + H(+). It participates in protein modification; protein glycosylation. Its function is as follows. Catalyzes the transfer of Gal to GlcNAc-based acceptors with a preference for the core3 O-linked glycan GlcNAc(beta1,3)GalNAc structure. Can use glycolipid LC3Cer as an efficient acceptor. The polypeptide is Beta-1,3-galactosyltransferase 5 (B3GALT5) (Pan troglodytes (Chimpanzee)).